We begin with the raw amino-acid sequence, 337 residues long: Anthranilate phosphoribosyltransferase (337 aa).

5-phospho-alpha-D-ribose 1-diphosphate contacts are provided by residues G81, 84–85 (GD), S89, 91–94 (NVST), 109–117 (KHGNRAATS), and A121. Anthranilate is bound at residue G81. Residue S93 coordinates Mg(2+). N112 lines the anthranilate pocket. R167 serves as a coordination point for anthranilate. Residues D226 and E227 each coordinate Mg(2+).

The protein belongs to the anthranilate phosphoribosyltransferase family. As to quaternary structure, homodimer. Requires Mg(2+) as cofactor.

It catalyses the reaction N-(5-phospho-beta-D-ribosyl)anthranilate + diphosphate = 5-phospho-alpha-D-ribose 1-diphosphate + anthranilate. It participates in amino-acid biosynthesis; L-tryptophan biosynthesis; L-tryptophan from chorismate: step 2/5. Functionally, catalyzes the transfer of the phosphoribosyl group of 5-phosphorylribose-1-pyrophosphate (PRPP) to anthranilate to yield N-(5'-phosphoribosyl)-anthranilate (PRA). The sequence is that of Anthranilate phosphoribosyltransferase from Methylorubrum extorquens (strain CM4 / NCIMB 13688) (Methylobacterium extorquens).